The following is a 480-amino-acid chain: MSLLTSYEGLRHQIERLVRENEELKKLVRLIRENQELKSAIKTQAGGLCISGFTGGLGEAAAGPPQHQGVFLPPASAAAKEPCSEDLGMVALAPLADMLNTPQLSPAAGSLVNPLAATLNPLLSGQIPLLQNNQFANLVPCSMSNQLTNPTTVSPGVTLASSLGLPSTGPLNSQMTSPMTVPPGTTLASSLGLTSTGSLTTSSRLVGPLAVSQSSPIMAPLAGTVAVSLSSPLLSSTATPLGVAQNVVPNPINNIGQPETPRVRRAEPTRGNFSGTSAYAGPAPTSKVNDTRGSRVMEQSRKNVVEMERKTPHRKSNKLPDNPRDTKQLVCERLVGEIAFQLDRRILSSIFPERVRLYGFTVSNIPEKIIQASLNPSNHKLDEDLCQTLTQRYVSIMNKLQSLGYNGRVHPALTEQLVNEYGILRERPELAASEGGCYTVDFLQRVLLETVHPSKLTDALLLLSCLHQLSHDDGKPMFIW.

A necessary for targeting to centrosomes region spans residues 1–76 (MSLLTSYEGL…HQGVFLPPAS (76 aa)). Positions 2-45 (SLLTSYEGLRHQIERLVRENEELKKLVRLIRENQELKSAIKTQA) form a coiled coil. 2 disordered regions span residues 252–297 (INNI…SRVM) and 305–324 (VEME…DNPR).

It belongs to the speriolin family. As to quaternary structure, found in a complex with CDC20, CDC27 and TUBG1. Interacts with CDC20. In terms of tissue distribution, expressed in testis. Expressed in pachyten spermatocytes, spermatids and epididymal sperm (at protein level).

It is found in the cytoplasm. It localises to the cytoskeleton. Its subcellular location is the microtubule organizing center. The protein resides in the centrosome. The sequence is that of Speriolin (Spatc1) from Mus musculus (Mouse).